The following is a 320-amino-acid chain: MQNRNTFSWVKEPINRSISVLIIIYVITQTSISNAYPIFAQQGYENPREATGRIVCANCHLANKPVDIEVPQAVLPDTVFEAVVRIPYDSQLKQVLANGKKGGLNVGAVLILPEGFELAPPDRISPEMKEKIGNLSFQSYRPNKKNILVIGPVPGQKYREILFPILSPDPAAKKDAHFLKYPIYVGGNRGRGQIYPDGSKSNNTVYNATAAGTITKILRKEKGGYEISIADASDGRQVVDNIPPGPELLVSEGESIKLDQPLTSNPNVGGFGQGDAEIVLQDPLRVQGLLFFLASVTLAQIFLVLKKKQFEKVQLSEMNF.

The signal sequence occupies residues 1–35 (MQNRNTFSWVKEPINRSISVLIIIYVITQTSISNA). 4 residues coordinate heme: tyrosine 36, cysteine 56, cysteine 59, and histidine 60. The chain crosses the membrane as a helical span at residues 286–306 (VQGLLFFLASVTLAQIFLVLK).

Belongs to the cytochrome f family. In terms of assembly, the 4 large subunits of the cytochrome b6-f complex are cytochrome b6, subunit IV (17 kDa polypeptide, petD), cytochrome f and the Rieske protein, while the 4 small subunits are PetG, PetL, PetM and PetN. The complex functions as a dimer. It depends on heme as a cofactor.

It localises to the plastid. The protein resides in the chloroplast thylakoid membrane. Component of the cytochrome b6-f complex, which mediates electron transfer between photosystem II (PSII) and photosystem I (PSI), cyclic electron flow around PSI, and state transitions. The polypeptide is Cytochrome f (Piper cenocladum (Ant piper)).